A 224-amino-acid chain; its full sequence is LexA repressor (224 aa).

The segment at residues 29–49 (RAEIARALGFRSPNAAEDHLK) is a DNA-binding region (H-T-H motif). Active-site for autocatalytic cleavage activity residues include Ser-142 and Lys-179.

This sequence belongs to the peptidase S24 family. Homodimer.

It carries out the reaction Hydrolysis of Ala-|-Gly bond in repressor LexA.. Its function is as follows. Represses a number of genes involved in the response to DNA damage (SOS response), including recA and lexA. In the presence of single-stranded DNA, RecA interacts with LexA causing an autocatalytic cleavage which disrupts the DNA-binding part of LexA, leading to derepression of the SOS regulon and eventually DNA repair. The chain is LexA repressor from Bordetella petrii (strain ATCC BAA-461 / DSM 12804 / CCUG 43448).